The following is a 141-amino-acid chain: Hemoglobin subunit alpha-D (141 aa).

In terms of domain architecture, Globin spans 1–141 (MLTAEDKKLI…VAAVLAEKYR (141 aa)). The heme b site is built by His-58 and His-87.

Heterotetramer of two alpha-D chains and two beta chains. In terms of tissue distribution, red blood cells.

Its function is as follows. Involved in oxygen transport from the lung to the various peripheral tissues. The sequence is that of Hemoglobin subunit alpha-D (HBAD) from Aythya fuligula (Tufted duck).